Here is a 217-residue protein sequence, read N- to C-terminus: Phosphatidylserine decarboxylase proenzyme (217 aa).

The active-site Schiff-base intermediate with substrate; via pyruvic acid is serine 183. Serine 183 carries the pyruvic acid (Ser); by autocatalysis modification.

Belongs to the phosphatidylserine decarboxylase family. PSD-A subfamily. In terms of assembly, heterodimer of a large membrane-associated beta subunit and a small pyruvoyl-containing alpha subunit. Pyruvate serves as cofactor. Post-translationally, is synthesized initially as an inactive proenzyme. Formation of the active enzyme involves a self-maturation process in which the active site pyruvoyl group is generated from an internal serine residue via an autocatalytic post-translational modification. Two non-identical subunits are generated from the proenzyme in this reaction, and the pyruvate is formed at the N-terminus of the alpha chain, which is derived from the carboxyl end of the proenzyme. The post-translation cleavage follows an unusual pathway, termed non-hydrolytic serinolysis, in which the side chain hydroxyl group of the serine supplies its oxygen atom to form the C-terminus of the beta chain, while the remainder of the serine residue undergoes an oxidative deamination to produce ammonia and the pyruvoyl prosthetic group on the alpha chain.

Its subcellular location is the cell membrane. The catalysed reaction is a 1,2-diacyl-sn-glycero-3-phospho-L-serine + H(+) = a 1,2-diacyl-sn-glycero-3-phosphoethanolamine + CO2. It functions in the pathway phospholipid metabolism; phosphatidylethanolamine biosynthesis; phosphatidylethanolamine from CDP-diacylglycerol: step 2/2. Catalyzes the formation of phosphatidylethanolamine (PtdEtn) from phosphatidylserine (PtdSer). The sequence is that of Phosphatidylserine decarboxylase proenzyme from Cupriavidus metallidurans (strain ATCC 43123 / DSM 2839 / NBRC 102507 / CH34) (Ralstonia metallidurans).